The sequence spans 183 residues: MPIMPDTWIRQMAREKGMIEPFVEAQKREGVISYGLSSYGYDARVAEEFKIFTDVDSAIVDPKNFASNSFVTRTGDITIPPNSFALAHTVEYFRIPRDTLVVCLGKSTYARCGIIVNVTPLEPEWEGQVTIEISNTTPLPARIYANEGICQFLFFQGASPCEVSYADRAGKYMRQSGVTTPRL.

106–111 (KSTYAR) lines the dCTP pocket. Catalysis depends on Glu132, which acts as the Proton donor/acceptor. 3 residues coordinate dCTP: Gln151, Tyr165, and Gln175.

It belongs to the dCTP deaminase family. In terms of assembly, homotrimer.

It carries out the reaction dCTP + H2O + H(+) = dUTP + NH4(+). Its pathway is pyrimidine metabolism; dUMP biosynthesis; dUMP from dCTP (dUTP route): step 1/2. Its function is as follows. Catalyzes the deamination of dCTP to dUTP. This is dCTP deaminase from Gluconobacter oxydans (strain 621H) (Gluconobacter suboxydans).